The following is a 782-amino-acid chain: General transcription and DNA repair factor IIH helicase/translocase subunit XPB (782 aa).

Positions 1-11 (MGKRDRVDRDK) are enriched in basic and acidic residues. The tract at residues 1-52 (MGKRDRVDRDKKKSKKRQYEEEEEDEDDAPGNESQEAVPSAAGKQVDESSTK) is disordered. A Nuclear localization signal motif is present at residues 6-18 (RVDRDKKKSKKRQ). The span at 20–30 (EEEEEDEDDAP) shows a compositional bias: acidic residues. Ser34 is subject to Phosphoserine. In terms of domain architecture, Helicase ATP-binding spans 328–489 (FGNGRARSGV…LNFLIGPKLY (162 aa)). 341 to 348 (PCGAGKSL) contributes to the ATP binding site. Residues 442-445 (EVHT) carry the DEVH box motif. The Helicase C-terminal domain occupies 543-703 (ACQFLIKFHE…AGMEEEELAF (161 aa)). Ser686 carries the phosphoserine modification. Phosphoserine; by CK2 is present on Ser751.

This sequence belongs to the helicase family. RAD25/XPB subfamily. In terms of assembly, component of the 7-subunit TFIIH core complex composed of XPB/ERCC3, XPD/ERCC2, GTF2H1, GTF2H2, GTF2H3, GTF2H4 and GTF2H5, which is active in NER. The core complex associates with the 3-subunit CDK-activating kinase (CAK) module composed of CCNH/cyclin H, CDK7 and MNAT1 to form the 10-subunit holoenzyme (holo-TFIIH) active in transcription. Interacts with PUF60. Interacts with ATF7IP. Interacts with KAT2A; leading to KAT2A recruitment to promoters and acetylation of histones. Part of TBP-based Pol II pre-initiation complex (PIC), in which Pol II core assembles with general transcription factors and other specific initiation factors including GTF2E1, GTF2E2, GTF2F1, GTF2F2, TCEA1, ERCC2, ERCC3, GTF2H2, GTF2H3, GTF2H4, GTF2H5, GTF2A1, GTF2A2, GTF2B and TBP; this large multi-subunit PIC complex mediates DNA unwinding and targets Pol II core to the transcription start site where the first phosphodiester bond forms. Phosphorylation on Ser-751 by CK2 controls the 5'-excision activity of ERCC1-XPF endonuclease; phosphorylated protein inhibits the excision activity and thus NER. Dephosphorylation reactivates the 5'-excision step. Phosphorylation has no effect on transcription or the 3'-5' helicase activity.

The protein resides in the nucleus. It carries out the reaction Couples ATP hydrolysis with the unwinding of duplex DNA by translocating in the 3'-5' direction.. The catalysed reaction is ATP + H2O = ADP + phosphate + H(+). Its activity is regulated as follows. Phosphorylation on Ser-751 by CK2 controls the 5'-excision activity of ERCC1-XPF endonuclease; phosphorylated protein inhibits the excision activity and thus NER. ATPase activity is stimulated by TFIIH subunit p52 (GTF2H4). DNA translocase activity by this subunit in TFIIH is stimulated by XPA, ERCC5/XPG and XFP plus ERCC1. In terms of biological role, ATP-dependent 3'-5' DNA helicase/translocase; binds dsDNA rather than ssDNA, unzipping it in a translocase rather than classical helicase activity. Component of the general transcription and DNA repair factor IIH (TFIIH) core complex. When complexed to CDK-activating kinase (CAK), involved in RNA transcription by RNA polymerase II. The ATPase activity of XPB/ERCC3, but not its helicase activity, is required for DNA opening; it may wrap around the damaged DNA wedging it open, causing localized melting and twisting that allows XPD/ERCC2 helicase to anchor. The ATP-dependent helicase activity of XPB/ERCC3 may be required for promoter escape. Also involved in transcription-coupled nucleotide excision repair (NER) of damaged DNA. In NER, TFIIH acts by opening DNA around the lesion to allow the excision of the damaged oligonucleotide and its replacement by a new DNA fragment. The structure of the TFIIH transcription complex differs from the NER-TFIIH complex; large movements by XPD/ERCC2 and XPB/ERCC3 are stabilized by XPA. In Rattus norvegicus (Rat), this protein is General transcription and DNA repair factor IIH helicase/translocase subunit XPB (Ercc3).